A 900-amino-acid polypeptide reads, in one-letter code: MLGTVIKKIVGTKNDREVKRYRKIVAQINQLEESFHKLSDDDLSGKTSEFRDRLAKGESLESILPEAFAVVREGSSRVMGMRHFDVQLIGGMVLNEGKIAEMRTGEGKTLVATLAVYLNALSSKGVHVVTVNDYLAKRDANWMRPLYEFLDMSVGVVFSGQDRDEKKAAYLCDITYGTNNEFGFDYLRDNMVFRLEDRVQRDLHFSVVDEVDSILIDEARTPLIISGAVEDSSEQYRKINQLAPLLVKQEDTDEEGSVGHYVFDESQRSIELTEDGHSFVEEWLVEQGMLAEGESLYAAGNLSLLHHVHACLKAHVIFKKNIDYVVQGDQIVIVDEHTGRTMAGRRWSEGIHQAVEAKEGVTIQAESQTLASTTFQNYFRLYEKLSGMTGTADTEAFEFQQIYGLSVIVIPTNRQVQRKDFNDLIYMSTEDKFEAIVLDIEEIVNQGRPVLVGTASIEYSELLSNYLVKKGVKHNVLNAKQHEREAEIVADAGRPGAVTIATNMAGRGTDIVLGGNLQVELAKLGENASEDEINALKADWKARNESVLAAGGLHIIGTERHESRRIDNQLRGRAGRQGDVGSSRFYLSLEDNLMRIFMSDRIKKMMMALGMEKGEAIEHKMVSNAIEKAQRKVEGRNFDIRKQLLEYDDVANDQRQVIYRQRFDMMVSEDLSEAISAMREEVVTSLVDEFIPPQSIFDMWDLEGLEEKARNEFGLELPVAKWVEEDKKLYEEPLRQKILDTFVNDYQAKEEIAGEQPFRAFEKQVLLQVLDTLWKEHLQTMDMLRQGIHLRGYAQKNPKQEYKRESFELFQGLLEQIKYEVIQIITRVKVQSAEEAEKIEAARRLQEEKTTMNMIHDSLDSLSDGGSDSADGQEYPKVGRNEPCPCGSGKKYKQCHGSLV.

Residues Gln87, 105–109 (GEGKT), and Asp510 each bind ATP. The tract at residues 857–890 (DSLDSLSDGGSDSADGQEYPKVGRNEPCPCGSGK) is disordered. The span at 860–872 (DSLSDGGSDSADG) shows a compositional bias: low complexity. Residues Cys884, Cys886, Cys895, and His896 each contribute to the Zn(2+) site.

Belongs to the SecA family. In terms of assembly, monomer and homodimer. Part of the essential Sec protein translocation apparatus which comprises SecA, SecYEG and auxiliary proteins SecDF-YajC and YidC. Requires Zn(2+) as cofactor.

Its subcellular location is the cell inner membrane. The protein localises to the cytoplasm. The enzyme catalyses ATP + H2O + cellular proteinSide 1 = ADP + phosphate + cellular proteinSide 2.. Functionally, part of the Sec protein translocase complex. Interacts with the SecYEG preprotein conducting channel. Has a central role in coupling the hydrolysis of ATP to the transfer of proteins into and across the cell membrane, serving both as a receptor for the preprotein-SecB complex and as an ATP-driven molecular motor driving the stepwise translocation of polypeptide chains across the membrane. This Marinomonas sp. (strain MWYL1) protein is Protein translocase subunit SecA.